A 177-amino-acid chain; its full sequence is Large ribosomal subunit protein uL6 (177 aa).

Belongs to the universal ribosomal protein uL6 family. As to quaternary structure, part of the 50S ribosomal subunit.

Functionally, this protein binds to the 23S rRNA, and is important in its secondary structure. It is located near the subunit interface in the base of the L7/L12 stalk, and near the tRNA binding site of the peptidyltransferase center. This Polynucleobacter necessarius subsp. necessarius (strain STIR1) protein is Large ribosomal subunit protein uL6.